Here is a 604-residue protein sequence, read N- to C-terminus: Complement factor I (604 aa).

Residues 1–18 form the signal peptide; the sequence is MKLALLILLLLNPHLSSS. 20 cysteine pairs are disulfide-bonded: C36–C260, C46–C57, C51–C62, C64–C96, C70–C89, C78–C109, C144–C186, C157–C219, C191–C201, C234–C252, C246–C261, C264–C276, C271–C289, C283–C298, C349–C474, C387–C403, C395–C465, C488–C552, C516–C531, and C542–C571. N-linked (GlcNAc...) asparagine glycosylation occurs at N40. The 54-residue stretch at 58-111 folds into the Kazal-like domain; the sequence is IEGTCACKLPYQCPKAGTPVCATNGRGYPTYCHLKSFECLHPEIKFSNNGTCTA. 3 N-linked (GlcNAc...) asparagine glycosylation sites follow: N106, N116, and N182. One can recognise an SRCR domain in the interval 117–217; that stretch reads VSLIYGSTDT…SKAPHGLAGV (101 aa). 2 LDL-receptor class A domains span residues 218–262 and 263–299; these read VCYT…LCCK and GCRGQAFLCKSGVCIPNQRKCNGEVDCITGEDESGCE. Ca(2+) is bound by residues K244, D247, V249, D251, D257, and E258. Ca(2+)-binding residues include N284, E286, D288, D294, and E295. A Peptidase S1 domain is found at 362-595; it reads VVGGKPAEMG…YFDWISYYVG (234 aa). Active-site charge relay system residues include H402 and D450. N515 carries N-linked (GlcNAc...) asparagine glycosylation. The active-site Charge relay system is the S546. The N-linked (GlcNAc...) asparagine glycan is linked to N557.

It belongs to the peptidase S1 family. As to quaternary structure, heterodimer of a light and heavy chains; disulfide-linked. The fully processed and mature protein circulates as a zymogen, and is allosterically activated by substrate-induced remodeling of the active site. Interacts with C3b. Interacts with complement factor H. Expressed in the liver by hepatocytes. Also present in other cells such as monocytes, fibroblasts or keratinocytes.

Its subcellular location is the secreted. The protein localises to the extracellular space. It catalyses the reaction Inactivates complement subcomponents C3b, iC3b and C4b by proteolytic cleavage.. Trypsin-like serine protease that plays an essential role in regulating the immune response by controlling all complement pathways. Inhibits these pathways by cleaving three peptide bonds in the alpha-chain of C3b and two bonds in the alpha-chain of C4b thereby inactivating these proteins. Essential cofactors for these reactions include factor H and C4BP in the fluid phase and membrane cofactor protein/CD46 and CR1 on cell surfaces. The presence of these cofactors on healthy cells allows degradation of deposited C3b by CFI in order to prevent undesired complement activation, while in apoptotic cells or microbes, the absence of such cofactors leads to C3b-mediated complement activation and subsequent opsonization. The sequence is that of Complement factor I (Cfi) from Rattus norvegicus (Rat).